A 295-amino-acid polypeptide reads, in one-letter code: HTH-type transcriptional regulator TfdS (295 aa).

The HTH lysR-type domain occupies 1 to 58; the sequence is MEFRQLRYFVAAAEEGNVGAAARRLHISQPPVTRQIHALEQHLGVLLFERSARGVQLT. Residues 18–37 constitute a DNA-binding region (H-T-H motif); sequence VGAAARRLHISQPPVTRQIH.

Belongs to the LysR transcriptional regulatory family.

It localises to the cytoplasm. Involved in the regulation of 3-chlorocatechol degradation. Transcriptional regulator of tfdB expression. Acts as a repressor in the absence of its effector (either 2-cis-chlorodiene lactone or chloromaleylacetate) but acts as an activator when its effector is present. The chain is HTH-type transcriptional regulator TfdS (tfdS) from Cupriavidus pinatubonensis (strain JMP 134 / LMG 1197) (Cupriavidus necator (strain JMP 134)).